The primary structure comprises 347 residues: MGLEEELLRIAKKLEKMVSRKKTEGALDLLKKLNSCQMSIQLLQTTRIGVAVNGVRKHCSDKEVVSLAKVLIKNWKRLLDSPRTTKGEREEREKAKKEKGLGCSDWKPEAGLSPPRKKGGGEPKTRRDSVDSRSSTTSSPKRPSLERSNSSKSKVETPTTPSSPSTPTFAPAVCLLAPCYLTGDSVRDKCVEMLSAALKAEDNFKDYGVNCDKLASEIEDHIYQELKSTDMKYRNRVRSRISNLKDPRNPGLRRNVLSGAISPELIAKMTAEEMASDELRELRNAMTQEAIREHQMAKTGGTTTDLLRCSKCKKKNCTYNQVQTRSADEPMTTFVLCNECGNRWKFC.

Residues 5-82 (EELLRIAKKL…KNWKRLLDSP (78 aa)) enclose the TFIIS N-terminal domain. Residues 83–100 (RTTKGEREEREKAKKEKG) show a composition bias toward basic and acidic residues. The segment at 83–168 (RTTKGEREER…TTPSSPSTPT (86 aa)) is disordered. S113 is modified (phosphoserine). The segment covering 119–131 (GGGEPKTRRDSVD) has biased composition (basic and acidic residues). Low complexity-rich tracts occupy residues 132 to 142 (SRSSTTSSPKR) and 157 to 168 (TPTTPSSPSTPT). Residue S139 is modified to Phosphoserine. The TFIIS central domain maps to 186–302 (VRDKCVEMLS…EHQMAKTGGT (117 aa)). The TFIIS-type zinc finger occupies 305–345 (DLLRCSKCKKKNCTYNQVQTRSADEPMTTFVLCNECGNRWK). C309, C312, C337, and C340 together coordinate Zn(2+).

This sequence belongs to the TFS-II family. As to expression, liver, kidney and heart.

The protein resides in the nucleus. Functionally, necessary for efficient RNA polymerase II transcription elongation past template-encoded arresting sites. The arresting sites in DNA have the property of trapping a certain fraction of elongating RNA polymerases that pass through, resulting in locked ternary complexes. Cleavage of the nascent transcript by S-II allows the resumption of elongation from the new 3'-terminus. This Mus musculus (Mouse) protein is Transcription elongation factor A protein 3 (Tcea3).